The sequence spans 287 residues: Pirin-1 (287 aa).

The residue at position 2 (Thr2) is an N-acetylthreonine.

It belongs to the pirin family. In terms of assembly, interacts with the G protein alpha-1 subunit GPA1. Interacts with NFYB6 and NFYB9.

The protein resides in the nucleus. Functionally, involved in abscisic acid signal transduction. Plays a role in seed germination and early seedling development. Involved in the blue light (BL) signaling. In Arabidopsis thaliana (Mouse-ear cress), this protein is Pirin-1 (PRN1).